Consider the following 320-residue polypeptide: o-succinylbenzoate synthase (320 aa).

Residue lysine 133 is the Proton donor of the active site. 3 residues coordinate Mg(2+): aspartate 161, glutamate 190, and aspartate 213. The active-site Proton acceptor is lysine 235.

The protein belongs to the mandelate racemase/muconate lactonizing enzyme family. MenC type 1 subfamily. It depends on a divalent metal cation as a cofactor.

The catalysed reaction is (1R,6R)-6-hydroxy-2-succinyl-cyclohexa-2,4-diene-1-carboxylate = 2-succinylbenzoate + H2O. Its pathway is quinol/quinone metabolism; 1,4-dihydroxy-2-naphthoate biosynthesis; 1,4-dihydroxy-2-naphthoate from chorismate: step 4/7. It participates in quinol/quinone metabolism; menaquinone biosynthesis. Converts 2-succinyl-6-hydroxy-2,4-cyclohexadiene-1-carboxylate (SHCHC) to 2-succinylbenzoate (OSB). The protein is o-succinylbenzoate synthase of Escherichia coli (strain K12 / MC4100 / BW2952).